Here is a 100-residue protein sequence, read N- to C-terminus: Urease subunit gamma (100 aa).

The protein belongs to the urease gamma subunit family. In terms of assembly, heterotrimer of UreA (gamma), UreB (beta) and UreC (alpha) subunits. Three heterotrimers associate to form the active enzyme.

It localises to the cytoplasm. It catalyses the reaction urea + 2 H2O + H(+) = hydrogencarbonate + 2 NH4(+). It functions in the pathway nitrogen metabolism; urea degradation; CO(2) and NH(3) from urea (urease route): step 1/1. The polypeptide is Urease subunit gamma (Blochmanniella floridana).